The chain runs to 351 residues: Phosphoribosylformylglycinamidine cyclo-ligase (351 aa).

Belongs to the AIR synthase family.

It is found in the cytoplasm. The enzyme catalyses 2-formamido-N(1)-(5-O-phospho-beta-D-ribosyl)acetamidine + ATP = 5-amino-1-(5-phospho-beta-D-ribosyl)imidazole + ADP + phosphate + H(+). The protein operates within purine metabolism; IMP biosynthesis via de novo pathway; 5-amino-1-(5-phospho-D-ribosyl)imidazole from N(2)-formyl-N(1)-(5-phospho-D-ribosyl)glycinamide: step 2/2. This Burkholderia cenocepacia (strain ATCC BAA-245 / DSM 16553 / LMG 16656 / NCTC 13227 / J2315 / CF5610) (Burkholderia cepacia (strain J2315)) protein is Phosphoribosylformylglycinamidine cyclo-ligase.